Consider the following 208-residue polypeptide: Small ribosomal subunit protein uS4 (208 aa).

Residues 95–155 (TRLDALVLRA…AKSQTMVPFQ (61 aa)) form the S4 RNA-binding domain.

The protein belongs to the universal ribosomal protein uS4 family. As to quaternary structure, part of the 30S ribosomal subunit. Contacts protein S5. The interaction surface between S4 and S5 is involved in control of translational fidelity.

Its function is as follows. One of the primary rRNA binding proteins, it binds directly to 16S rRNA where it nucleates assembly of the body of the 30S subunit. In terms of biological role, with S5 and S12 plays an important role in translational accuracy. The polypeptide is Small ribosomal subunit protein uS4 (Bifidobacterium adolescentis (strain ATCC 15703 / DSM 20083 / NCTC 11814 / E194a)).